A 200-amino-acid chain; its full sequence is Recombination protein RecR (200 aa).

A C4-type zinc finger spans residues 58 to 73; it reads CSVCGNLTDTDPCFIC. The region spanning 81–176 is the Toprim domain; that stretch reads DLLCVVERPR…SVTRIAHGLP (96 aa).

It belongs to the RecR family.

Functionally, may play a role in DNA repair. It seems to be involved in an RecBC-independent recombinational process of DNA repair. It may act with RecF and RecO. The sequence is that of Recombination protein RecR from Pelotomaculum thermopropionicum (strain DSM 13744 / JCM 10971 / SI).